The chain runs to 179 residues: Large ribosomal subunit protein uL5 (179 aa).

Belongs to the universal ribosomal protein uL5 family. In terms of assembly, part of the 50S ribosomal subunit; part of the 5S rRNA/L5/L18/L25 subcomplex. Contacts the 5S rRNA and the P site tRNA. Forms a bridge to the 30S subunit in the 70S ribosome.

Functionally, this is one of the proteins that bind and probably mediate the attachment of the 5S RNA into the large ribosomal subunit, where it forms part of the central protuberance. In the 70S ribosome it contacts protein S13 of the 30S subunit (bridge B1b), connecting the 2 subunits; this bridge is implicated in subunit movement. Contacts the P site tRNA; the 5S rRNA and some of its associated proteins might help stabilize positioning of ribosome-bound tRNAs. This chain is Large ribosomal subunit protein uL5, found in Pseudomonas aeruginosa (strain LESB58).